We begin with the raw amino-acid sequence, 32 residues long: Delta-actitoxin-Eqd1a (32 aa).

The protein belongs to the sea anemone short toxin (type III) family. Contains 4 disulfide bonds.

Its subcellular location is the secreted. The protein resides in the nematocyst. Functionally, binds specifically to sodium channels (Nav) of the axonal membrane of crayfish and prolongs the falling phase of the action potential. It also increases the maximum rates of rise of both action potential and resting potential. Is only active on crustaceans. The chain is Delta-actitoxin-Eqd1a from Entacmaea quadricolor (Bubble-tip anemone).